A 1609-amino-acid polypeptide reads, in one-letter code: Probable outer membrane protein pmp21 (1609 aa).

The N-terminal stretch at 1-30 (MVAKKTVRSYRSSFSHSVIVAILSAGIAFE) is a signal peptide. Residues 132–145 (FSQPTQEPDTSNAV) are compositionally biased toward polar residues. Disordered stretches follow at residues 132–183 (FSQP…KSPE) and 640–677 (TAPV…EVPP). 2 stretches are compositionally biased toward basic and acidic residues: residues 149-175 (ISSD…KEVS) and 651-672 (NKDE…KTVE). The Autotransporter domain occupies 1328 to 1609 (ELDFSTNVWG…DFNGGIRIIF (282 aa)).

Belongs to the PMP outer membrane protein family.

The protein localises to the secreted. The protein resides in the cell wall. Its subcellular location is the cell outer membrane. This Chlamydia pneumoniae (Chlamydophila pneumoniae) protein is Probable outer membrane protein pmp21 (pmp21).